The following is a 139-amino-acid chain: uncharacterized protein (139 aa).

Positions 83-109 (LIPPKKTSPATSSSLKPPRRPRGCLNG) are disordered. Low complexity predominate over residues 86–98 (PKKTSPATSSSLK).

The protein to M.pneumoniae MPN_091 and MPN_463.

This is an uncharacterized protein from Mycoplasma pneumoniae (strain ATCC 29342 / M129 / Subtype 1) (Mycoplasmoides pneumoniae).